The primary structure comprises 503 residues: ESX-5 secretion system protein EccD5 (503 aa).

The next 10 membrane-spanning stretches (helical) occupy residues 137–157 (VVAV…ASGV), 169–189 (LTTI…MMLL), 200–220 (VADI…ASAP), 224–244 (VGSP…ALAL), 250–270 (RLAI…ASLS), 272–292 (MVAA…CVVM), 359–379 (FLSG…TSLC), 414–434 (ITLA…YALV), 443–463 (IVAS…AVVP), and 480–500 (YLCL…YAAI).

Belongs to the EccD/Snm4 family. Part of the ESX-5 / type VII secretion system (T7SS), which is composed of cytosolic and membrane components. The ESX-5 membrane complex is composed of EccB5, EccC5, EccD5 and EccE5.

The protein localises to the cell inner membrane. Functionally, part of the ESX-5 specialized secretion system, which is responsible for the secretion of EsxN and a number of PE_PGRS and PPE proteins. This component is essential for ESX-5 complex stability and secretion. This Mycobacterium marinum (strain ATCC BAA-535 / M) protein is ESX-5 secretion system protein EccD5.